The chain runs to 203 residues: Histidine biosynthesis bifunctional protein HisIE (203 aa).

Residues 1–114 (MLTEQQRREL…FGDTAHQWLF (114 aa)) are phosphoribosyl-AMP cyclohydrolase. Positions 115-203 (LYQLEQLLAE…VIENLRKRHQ (89 aa)) are phosphoribosyl-ATP pyrophosphohydrolase.

In the N-terminal section; belongs to the PRA-CH family. This sequence in the C-terminal section; belongs to the PRA-PH family.

Its subcellular location is the cytoplasm. It carries out the reaction 1-(5-phospho-beta-D-ribosyl)-ATP + H2O = 1-(5-phospho-beta-D-ribosyl)-5'-AMP + diphosphate + H(+). The enzyme catalyses 1-(5-phospho-beta-D-ribosyl)-5'-AMP + H2O = 1-(5-phospho-beta-D-ribosyl)-5-[(5-phospho-beta-D-ribosylamino)methylideneamino]imidazole-4-carboxamide. Its pathway is amino-acid biosynthesis; L-histidine biosynthesis; L-histidine from 5-phospho-alpha-D-ribose 1-diphosphate: step 2/9. The protein operates within amino-acid biosynthesis; L-histidine biosynthesis; L-histidine from 5-phospho-alpha-D-ribose 1-diphosphate: step 3/9. This is Histidine biosynthesis bifunctional protein HisIE from Shigella sonnei (strain Ss046).